A 246-amino-acid chain; its full sequence is Transmembrane and ubiquitin-like domain-containing protein 1 (246 aa).

Residues 2-30 (ALIEGVGDEVTILFSALACLLVLALAWVS) are required to release iHOPS from membranes. The helical transmembrane segment at 11–31 (VTILFSALACLLVLALAWVST) threads the bilayer. The interval 35 to 102 (EGADPLPQPS…PPPPDSPQEP (68 aa)) is disordered. The segment covering 40-50 (LPQPSGTPTPT) has biased composition (pro residues). 2 positions are modified to phosphothreonine: T71 and T92. 2 positions are modified to phosphoserine: S98 and S127. A Ubiquitin-like domain is found at 103–176 (LVLRLKFLND…LHCHVSTRVG (74 aa)). The next 2 helical transmembrane spans lie at 195–215 (VGSLLLPLLLLLLLLLWYCQI) and 221–241 (FPLTATLGLAGFTLLLSLLAF).

In terms of assembly, interacts with EEF1A1, GRIA2, GRIP1, CAMLG, TUBG1. Interacts with NPM1 and CDKN2A; TMUB1 can enhance interaction between NPM1 and CDKN2A and is proposed to bridge the proteins; proposed to be mediated by iHOPS. Interacts with ERLIN2 and AMFR; TMUB1 promotes the interaction of ERLIN2 with AMFR. In terms of processing, processed by regulated intramembrane proteolysis (RIP) in the N-terminus to release iHOPS from membranes.

The protein localises to the membrane. It is found in the postsynaptic cell membrane. The protein resides in the recycling endosome. It localises to the cytoplasm. Its subcellular location is the nucleus. The protein localises to the nucleolus. It is found in the cytoskeleton. The protein resides in the microtubule organizing center. It localises to the centrosome. Functionally, involved in sterol-regulated ubiquitination and degradation of HMG-CoA reductase HMGCR. Involved in positive regulation of AMPA-selective glutamate receptor GRIA2 recycling to the cell surface. Acts as negative regulator of hepatocyte growth during regeneration. Its function is as follows. May contribute to the regulation of translation during cell-cycle progression. May contribute to the regulation of cell proliferation. May be involved in centrosome assembly. Modulates stabilization and nucleolar localization of tumor suppressor CDKN2A and enhances association between CDKN2A and NPM1. This chain is Transmembrane and ubiquitin-like domain-containing protein 1 (TMUB1), found in Bos taurus (Bovine).